Consider the following 567-residue polypeptide: Proline--tRNA ligase (567 aa).

This sequence belongs to the class-II aminoacyl-tRNA synthetase family. ProS type 1 subfamily. Homodimer.

The protein localises to the cytoplasm. It carries out the reaction tRNA(Pro) + L-proline + ATP = L-prolyl-tRNA(Pro) + AMP + diphosphate. Functionally, catalyzes the attachment of proline to tRNA(Pro) in a two-step reaction: proline is first activated by ATP to form Pro-AMP and then transferred to the acceptor end of tRNA(Pro). As ProRS can inadvertently accommodate and process non-cognate amino acids such as alanine and cysteine, to avoid such errors it has two additional distinct editing activities against alanine. One activity is designated as 'pretransfer' editing and involves the tRNA(Pro)-independent hydrolysis of activated Ala-AMP. The other activity is designated 'posttransfer' editing and involves deacylation of mischarged Ala-tRNA(Pro). The misacylated Cys-tRNA(Pro) is not edited by ProRS. The protein is Proline--tRNA ligase of Geobacillus kaustophilus (strain HTA426).